The chain runs to 635 residues: Threonine--tRNA ligase (635 aa).

The 61-residue stretch at 1–61 (MIKITLKDGK…HKDSSLEILT (61 aa)) folds into the TGS domain. The segment at 242 to 532 (DHRKLGKELD…LIEQYAGAFP (291 aa)) is catalytic. Residues cysteine 333, histidine 384, and histidine 509 each contribute to the Zn(2+) site.

This sequence belongs to the class-II aminoacyl-tRNA synthetase family. In terms of assembly, homodimer. The cofactor is Zn(2+).

Its subcellular location is the cytoplasm. It carries out the reaction tRNA(Thr) + L-threonine + ATP = L-threonyl-tRNA(Thr) + AMP + diphosphate + H(+). Catalyzes the attachment of threonine to tRNA(Thr) in a two-step reaction: L-threonine is first activated by ATP to form Thr-AMP and then transferred to the acceptor end of tRNA(Thr). Also edits incorrectly charged L-seryl-tRNA(Thr). The chain is Threonine--tRNA ligase from Clostridium botulinum (strain 657 / Type Ba4).